The following is a 1439-amino-acid chain: ABC transporter G family member 14 (1439 aa).

The segment covering 1 to 17 has biased composition (basic and acidic residues); it reads MEENSNKFEQELKEIGQ. The interval 1 to 21 is disordered; sequence MEENSNKFEQELKEIGQDRNQ. One can recognise an ABC transporter 1 domain in the interval 117-370; it reads FSILNFFKPS…FMSLGFDCEP (254 aa). Residues 475 to 700 enclose the ABC transmembrane type-2 1 domain; sequence LNDKFGLFTK…GSEFDAYRIC (226 aa). A run of 6 helical transmembrane segments spans residues 479 to 499, 516 to 536, 564 to 584, 589 to 609, 614 to 634, and 734 to 754; these read FGLF…SSVF, ILSA…MTFI, IPFT…MFGL, GKFF…TALF, YLCP…IFML, and IIVY…MEYI. The ABC transporter 2 domain occupies 805–1049; sequence FTWQNIRYTV…LTSYFERHGV (245 aa). 841–848 contributes to the ATP binding site; it reads GSSGAGKT. Residues 1141–1366 enclose the ABC transmembrane type-2 2 domain; the sequence is YYTYGSFVQS…YNTCQNYTSA (226 aa). Transmembrane regions (helical) follow at residues 1144 to 1164, 1175 to 1195, 1217 to 1237, 1256 to 1276, 1283 to 1303, and 1413 to 1433; these read YGSF…FWNL, IFFI…VMPQ, FAIS…TIFF, FYFW…GQAV, MFFA…FSGV, and VGII…FVYL.

It belongs to the ABC transporter superfamily. ABCG family. PDR (TC 3.A.1.205) subfamily.

It is found in the membrane. The protein is ABC transporter G family member 14 (abcG14) of Dictyostelium discoideum (Social amoeba).